The sequence spans 337 residues: MFGYLQLINPTTDIYIKDYGNFSGIVAHQAYDPVRRDHMLLRSMKLHFGPNSKLLWLGDFHAITLSHANMIFGASSVGFKGVNVSTLPPDTLTTGIRPRPVVTMDFAQLKGFYSDLAQKEDYIMYFHDMVKFVSQTGGAPVSLRDVFLWISESVTGPVVIRTDCVTGCNNLWPSGSGHFYFPYERKTKFRYGTFVECGKNLTWSEGPQWDVKSYVVGFNFVTRANSLLGGGFDEVCYRLMMQAEVPRQVAEQGLTLEQAVRKLASEHHMSRPQLTSRRVPGITDQTKYEAYVVCGPFRTGQVVADSLQMAEDLAWREMLGTLKTLIHDEARQTKGCC.

Its subcellular location is the virion. The protein localises to the host cytoplasm. This chain is Structural protein VP9, found in Colorado tick fever virus (strain USA/Florio N-7180) (CTFV).